Here is a 325-residue protein sequence, read N- to C-terminus: Ribosomal RNA small subunit methyltransferase H (325 aa).

Residues 33–35 (GGH), Asp52, Leu87, Asp101, and Gln108 contribute to the S-adenosyl-L-methionine site. The tract at residues 285–325 (AEPAGEVEKADNPRAASVRLRAAERTAPNPDRTQPTIGGAS) is disordered. A compositionally biased stretch (polar residues) spans 315–325 (DRTQPTIGGAS).

Belongs to the methyltransferase superfamily. RsmH family.

Its subcellular location is the cytoplasm. It catalyses the reaction cytidine(1402) in 16S rRNA + S-adenosyl-L-methionine = N(4)-methylcytidine(1402) in 16S rRNA + S-adenosyl-L-homocysteine + H(+). Its function is as follows. Specifically methylates the N4 position of cytidine in position 1402 (C1402) of 16S rRNA. The chain is Ribosomal RNA small subunit methyltransferase H from Frankia alni (strain DSM 45986 / CECT 9034 / ACN14a).